Here is a 71-residue protein sequence, read N- to C-terminus: cAMP-dependent protein kinase inhibitor beta (71 aa).

The interval 1 to 21 (MTDVESVISSFASSARAGRRN) is disordered. Thr-2 carries the post-translational modification Blocked amino end (Thr). Ser-35 is subject to Phosphoserine. The segment at 51 to 71 (AKMKNEEKDQGQPKKPLDEDK) is disordered.

This sequence belongs to the PKI family. In terms of tissue distribution, testis.

Extremely potent competitive inhibitor of cAMP-dependent protein kinase activity, this protein interacts with the catalytic subunit of the enzyme after the cAMP-induced dissociation of its regulatory chains. This is cAMP-dependent protein kinase inhibitor beta (Pkib) from Rattus norvegicus (Rat).